An 81-amino-acid polypeptide reads, in one-letter code: ATP synthase subunit c (81 aa).

2 helical membrane-spanning segments follow: residues 7–27 (AASV…PGLG) and 57–77 (FAFM…LLFA).

It belongs to the ATPase C chain family. F-type ATPases have 2 components, F(1) - the catalytic core - and F(0) - the membrane proton channel. F(1) has five subunits: alpha(3), beta(3), gamma(1), delta(1), epsilon(1). F(0) has four main subunits: a(1), b(1), b'(1) and c(10-14). The alpha and beta chains form an alternating ring which encloses part of the gamma chain. F(1) is attached to F(0) by a central stalk formed by the gamma and epsilon chains, while a peripheral stalk is formed by the delta, b and b' chains.

It localises to the cellular thylakoid membrane. Its function is as follows. F(1)F(0) ATP synthase produces ATP from ADP in the presence of a proton or sodium gradient. F-type ATPases consist of two structural domains, F(1) containing the extramembraneous catalytic core and F(0) containing the membrane proton channel, linked together by a central stalk and a peripheral stalk. During catalysis, ATP synthesis in the catalytic domain of F(1) is coupled via a rotary mechanism of the central stalk subunits to proton translocation. Functionally, key component of the F(0) channel; it plays a direct role in translocation across the membrane. A homomeric c-ring of between 10-14 subunits forms the central stalk rotor element with the F(1) delta and epsilon subunits. The protein is ATP synthase subunit c of Prochlorococcus marinus (strain MIT 9301).